Consider the following 109-residue polypeptide: uncharacterized protein (109 aa).

It to E.coli YtfG C-terminal region.

This is an uncharacterized protein from Haemophilus influenzae (strain ATCC 51907 / DSM 11121 / KW20 / Rd).